The following is a 750-amino-acid chain: von Willebrand factor A domain-containing protein DDB_G0292188 (750 aa).

Positions 17–249 (EIKTVFNSDS…IKDDLLLDVV (233 aa)) constitute a VWFA domain. Composition is skewed to low complexity over residues 586-595 (SINDNNNSFN) and 603-645 (PFFE…SSAS). The disordered stretch occupies residues 586–657 (SINDNNNSFN…PPPSQMLNEQ (72 aa)).

The chain is von Willebrand factor A domain-containing protein DDB_G0292188 from Dictyostelium discoideum (Social amoeba).